The chain runs to 459 residues: Putrescine aminotransferase (459 aa).

Pyridoxal 5'-phosphate is bound by residues 150 to 151 and Q274; that span reads GT. Position 300 is an N6-(pyridoxal phosphate)lysine (K300). Pyridoxal 5'-phosphate is bound at residue T332.

The protein belongs to the class-III pyridoxal-phosphate-dependent aminotransferase family. Putrescine aminotransferase subfamily. Requires pyridoxal 5'-phosphate as cofactor.

The catalysed reaction is an alkane-alpha,omega-diamine + 2-oxoglutarate = an omega-aminoaldehyde + L-glutamate. The enzyme catalyses putrescine + 2-oxoglutarate = 1-pyrroline + L-glutamate + H2O. It catalyses the reaction cadaverine + 2-oxoglutarate = 5-aminopentanal + L-glutamate. It functions in the pathway amine and polyamine degradation; putrescine degradation; 4-aminobutanal from putrescine (transaminase route): step 1/1. Catalyzes the aminotransferase reaction from putrescine to 2-oxoglutarate, leading to glutamate and 4-aminobutanal, which spontaneously cyclizes to form 1-pyrroline. This is the first step in one of two pathways for putrescine degradation, where putrescine is converted into 4-aminobutanoate (gamma-aminobutyrate or GABA) via 4-aminobutanal. Also functions as a cadaverine transaminase in a a L-lysine degradation pathway to succinate that proceeds via cadaverine, glutarate and L-2-hydroxyglutarate. This chain is Putrescine aminotransferase, found in Escherichia coli (strain K12 / MC4100 / BW2952).